Reading from the N-terminus, the 251-residue chain is tRNA (guanine-N(7)-)-methyltransferase (251 aa).

S-adenosyl-L-methionine-binding positions include glycine 71, glutamate 94–leucine 95, asparagine 128–serine 129, and leucine 148. Aspartate 151 is an active-site residue. Residue threonine 226–glutamate 228 participates in S-adenosyl-L-methionine binding.

Belongs to the class I-like SAM-binding methyltransferase superfamily. TrmB family.

The protein localises to the nucleus. It carries out the reaction guanosine(46) in tRNA + S-adenosyl-L-methionine = N(7)-methylguanosine(46) in tRNA + S-adenosyl-L-homocysteine. It participates in tRNA modification; N(7)-methylguanine-tRNA biosynthesis. In terms of biological role, catalyzes the formation of N(7)-methylguanine at position 46 (m7G46) in tRNA. The chain is tRNA (guanine-N(7)-)-methyltransferase from Arabidopsis thaliana (Mouse-ear cress).